The following is a 336-amino-acid chain: Aspartate--ammonia ligase (336 aa).

It belongs to the class-II aminoacyl-tRNA synthetase family. AsnA subfamily.

It is found in the cytoplasm. The catalysed reaction is L-aspartate + NH4(+) + ATP = L-asparagine + AMP + diphosphate + H(+). It functions in the pathway amino-acid biosynthesis; L-asparagine biosynthesis; L-asparagine from L-aspartate (ammonia route): step 1/1. The protein is Aspartate--ammonia ligase of Clostridium perfringens (strain ATCC 13124 / DSM 756 / JCM 1290 / NCIMB 6125 / NCTC 8237 / Type A).